The primary structure comprises 293 residues: Glutamyl-Q tRNA(Asp) synthetase (293 aa).

L-glutamate contacts are provided by residues 8-12 and E44; that span reads RFAPT. The short motif at 11–21 is the 'HIGH' region element; that stretch reads PTPSGYLHFGS. Residues C100, C102, Y114, and C118 each coordinate Zn(2+). Residues Y171 and R189 each contribute to the L-glutamate site. Residues 227 to 231 carry the 'KMSKS' region motif; that stretch reads KLGKS. K230 serves as a coordination point for ATP.

The protein belongs to the class-I aminoacyl-tRNA synthetase family. GluQ subfamily. Requires Zn(2+) as cofactor.

Catalyzes the tRNA-independent activation of glutamate in presence of ATP and the subsequent transfer of glutamate onto a tRNA(Asp). Glutamate is transferred on the 2-amino-5-(4,5-dihydroxy-2-cyclopenten-1-yl) moiety of the queuosine in the wobble position of the QUC anticodon. The polypeptide is Glutamyl-Q tRNA(Asp) synthetase (Pseudomonas aeruginosa (strain ATCC 15692 / DSM 22644 / CIP 104116 / JCM 14847 / LMG 12228 / 1C / PRS 101 / PAO1)).